A 547-amino-acid chain; its full sequence is Glucose-6-phosphate isomerase (547 aa).

Glu-351 (proton donor) is an active-site residue. Catalysis depends on residues His-382 and Lys-509.

Belongs to the GPI family.

It localises to the cytoplasm. The catalysed reaction is alpha-D-glucose 6-phosphate = beta-D-fructose 6-phosphate. Its pathway is carbohydrate biosynthesis; gluconeogenesis. It functions in the pathway carbohydrate degradation; glycolysis; D-glyceraldehyde 3-phosphate and glycerone phosphate from D-glucose: step 2/4. In terms of biological role, catalyzes the reversible isomerization of glucose-6-phosphate to fructose-6-phosphate. The protein is Glucose-6-phosphate isomerase of Coxiella burnetii (strain RSA 493 / Nine Mile phase I).